Here is a 105-residue protein sequence, read N- to C-terminus: Cell division protein FtsB (105 aa).

Topologically, residues 1 to 3 (MGK) are cytoplasmic. Residues 4–21 (LTLLLLALLVWLQYSLWF) traverse the membrane as a helical segment. The Periplasmic portion of the chain corresponds to 22–105 (GKNGLHDYTR…QASGQQQNNR (84 aa)). The stretch at 33-62 (NDDVTAQQATNAKLKARNDQLFAEIDDLNG) forms a coiled coil.

It belongs to the FtsB family. In terms of assembly, part of a complex composed of FtsB, FtsL and FtsQ.

The protein resides in the cell inner membrane. Essential cell division protein. May link together the upstream cell division proteins, which are predominantly cytoplasmic, with the downstream cell division proteins, which are predominantly periplasmic. In Klebsiella aerogenes (Enterobacter aerogenes), this protein is Cell division protein FtsB.